The primary structure comprises 61 residues: Beta-insect depressant toxin BotIT5 (61 aa).

Positions 1-61 (DGYIRKRDGC…TWKSETNTCG (61 aa)) constitute an LCN-type CS-alpha/beta domain. Cystine bridges form between C10/C60, C14/C35, C21/C42, and C25/C44. G61 is modified (glycine amide).

The protein belongs to the long (4 C-C) scorpion toxin superfamily. Sodium channel inhibitor family. Beta subfamily. As to expression, expressed by the venom gland.

The protein localises to the secreted. Functionally, depressant insect beta-toxins cause a transient contraction paralysis followed by a slow flaccid paralysis. They bind voltage-independently at site-4 of sodium channels (Nav) and shift the voltage of activation toward more negative potentials thereby affecting sodium channel activation and promoting spontaneous and repetitive firing. This toxin is active only on insects. The chain is Beta-insect depressant toxin BotIT5 from Buthus occitanus tunetanus (Common European scorpion).